The following is an 85-amino-acid chain: U4-theraphotoxin-Hhn1g (85 aa).

An N-terminal signal peptide occupies residues 1-22 (MKVTLIAILTCAAVLVLHTTAA). Residues 23 to 48 (EELEAESQLMEVGMPDTELAAVDEER) constitute a propeptide that is removed on maturation. Cystine bridges form between Cys52/Cys66, Cys56/Cys77, and Cys71/Cys82.

Belongs to the neurotoxin 12 (Hwtx-2) family. 02 (Hwtx-2) subfamily. In terms of tissue distribution, expressed by the venom gland.

It localises to the secreted. Its function is as follows. Postsynaptic neurotoxin. This is U4-theraphotoxin-Hhn1g from Cyriopagopus hainanus (Chinese bird spider).